Here is a 471-residue protein sequence, read N- to C-terminus: Tripartite motif-containing protein 60 (471 aa).

The segment at 16–57 (CPICLEYLKDPVTINCGHNFCRSCLSVSWKDLDDTFPCPVCR) adopts an RING-type zinc-finger fold. The segment at 92–133 (KENAMCEKHNQFLTLFCVKDLEILCTQCSFSTKHQKHYICPI) adopts a B box-type zinc-finger fold. Zn(2+) contacts are provided by C97, H100, C119, and H125. Positions 171–223 (ELKKKVEYKREEINSEFEQIRLFLQNEQEMILRQIQDEEMNILAKLNENLVEL) form a coiled coil. A B30.2/SPRY domain is found at 277–470 (FSLPPQYSGL…LKICSVSDSE (194 aa)).

This sequence belongs to the TRIM/RBCC family.

Its function is as follows. E3 SUMO-protein ligase that mediates SUMOylation of TAB2 leading to inhibition of NF-kappa-B and MAPK pathways by suppressing the TRAF6/TAB2/TAK1 complex. This Homo sapiens (Human) protein is Tripartite motif-containing protein 60 (TRIM60).